The following is a 499-amino-acid chain: MINRALISVYNKEGLLELAQFLKNKGVELISTGGTYKYLEQNDIQVTEVSKITGFDEILDGRVKTLHPVIHSGILAKRDNKEHMDTIAKKDILPIDMVVVNLYPFFDKVDDNITFEEKVEFIDIGGPTMIRAAAKNFKDVIVVTDVGDYSKLIEEIDSKGDVPYDFRKKLAGKVFNLMSAYDGAISNFLLEEDYPEYLSLSYKKMDNLRYGENPHQSAAYYTATAGTAPMKDFTQLNGKQLSYNNIKDMDIAWKVVNEFEEICCVAVKHNTPCGVALGKDLYEAYVKTYECDPTSIFGGIIAVNRKLDVKTAEEISKIFVEIVIAPDFDEEALKVLMEKKNLRIIKCSVKPTNSMEIAKVDGGILVQSADDKLVENMEVVTDKKPSKEEINNLIFGMKVCKYVKSNAIVVVKDFMAKGIGGGQVNRIWPTCHALDRAGDGVVLASDAFFPFNDVVCEAAKYGIKAIIQPGGSVRDKDSIEECNKNGISMVFTGVRHFKH.

Residues 1–144 (MINRALISVY…KNFKDVIVVT (144 aa)) enclose the MGS-like domain.

This sequence belongs to the PurH family.

It carries out the reaction (6R)-10-formyltetrahydrofolate + 5-amino-1-(5-phospho-beta-D-ribosyl)imidazole-4-carboxamide = 5-formamido-1-(5-phospho-D-ribosyl)imidazole-4-carboxamide + (6S)-5,6,7,8-tetrahydrofolate. It catalyses the reaction IMP + H2O = 5-formamido-1-(5-phospho-D-ribosyl)imidazole-4-carboxamide. The protein operates within purine metabolism; IMP biosynthesis via de novo pathway; 5-formamido-1-(5-phospho-D-ribosyl)imidazole-4-carboxamide from 5-amino-1-(5-phospho-D-ribosyl)imidazole-4-carboxamide (10-formyl THF route): step 1/1. Its pathway is purine metabolism; IMP biosynthesis via de novo pathway; IMP from 5-formamido-1-(5-phospho-D-ribosyl)imidazole-4-carboxamide: step 1/1. This is Bifunctional purine biosynthesis protein PurH from Clostridium kluyveri (strain NBRC 12016).